The primary structure comprises 922 residues: Phosphoenolpyruvate carboxylase (922 aa).

Residues 1-20 (MTKTLHARPSAATDTTFAPP) are disordered. Catalysis depends on residues His-142 and Lys-581.

The protein belongs to the PEPCase type 1 family. It depends on Mg(2+) as a cofactor.

It catalyses the reaction oxaloacetate + phosphate = phosphoenolpyruvate + hydrogencarbonate. Its function is as follows. Forms oxaloacetate, a four-carbon dicarboxylic acid source for the tricarboxylic acid cycle. The protein is Phosphoenolpyruvate carboxylase (ppc) of Methylorubrum extorquens (strain ATCC 14718 / DSM 1338 / JCM 2805 / NCIMB 9133 / AM1) (Methylobacterium extorquens).